Consider the following 539-residue polypeptide: Glycerol kinase (539 aa).

Threonine 49 lines the ADP pocket. 3 residues coordinate ATP: threonine 49, threonine 50, and serine 51. Threonine 49 contributes to the sn-glycerol 3-phosphate binding site. Position 53 (arginine 53) interacts with ADP. Arginine 119, glutamate 120, tyrosine 171, and aspartate 280 together coordinate sn-glycerol 3-phosphate. Glycerol-binding residues include arginine 119, glutamate 120, tyrosine 171, aspartate 280, and glutamine 281. Threonine 302 and glycine 345 together coordinate ADP. ATP-binding residues include threonine 302, glycine 345, glutamine 349, and glycine 446. 2 residues coordinate ADP: glycine 446 and asparagine 450.

This sequence belongs to the FGGY kinase family.

It catalyses the reaction glycerol + ATP = sn-glycerol 3-phosphate + ADP + H(+). The protein operates within polyol metabolism; glycerol degradation via glycerol kinase pathway; sn-glycerol 3-phosphate from glycerol: step 1/1. Its activity is regulated as follows. Inhibited by fructose 1,6-bisphosphate (FBP). Its function is as follows. Key enzyme in the regulation of glycerol uptake and metabolism. Catalyzes the phosphorylation of glycerol to yield sn-glycerol 3-phosphate. The chain is Glycerol kinase from Rhodopirellula baltica (strain DSM 10527 / NCIMB 13988 / SH1).